The sequence spans 274 residues: Eukaryotic translation initiation factor 3 subunit G-2 (274 aa).

Residues 194-272 form the RRM domain; the sequence is SAVRISNLSE…LILCVEWSKP (79 aa).

This sequence belongs to the eIF-3 subunit G family. As to quaternary structure, component of the eukaryotic translation initiation factor 3 (eIF-3) complex. The eIF-3 complex interacts with pix.

It localises to the cytoplasm. RNA-binding component of the eukaryotic translation initiation factor 3 (eIF-3) complex, which is involved in protein synthesis of a specialized repertoire of mRNAs and, together with other initiation factors, stimulates binding of mRNA and methionyl-tRNAi to the 40S ribosome. The eIF-3 complex specifically targets and initiates translation of a subset of mRNAs involved in cell proliferation. This subunit can bind 18S rRNA. The sequence is that of Eukaryotic translation initiation factor 3 subunit G-2 from Drosophila pseudoobscura pseudoobscura (Fruit fly).